The sequence spans 325 residues: GMP reductase (325 aa).

Residue Cys174 is the Thioimidate intermediate of the active site. 203–226 (IIADGGIRTHGDIAKSIRFGATMV) is a binding site for NADP(+).

The protein belongs to the IMPDH/GMPR family. GuaC type 2 subfamily.

The catalysed reaction is IMP + NH4(+) + NADP(+) = GMP + NADPH + 2 H(+). Its function is as follows. Catalyzes the irreversible NADPH-dependent deamination of GMP to IMP. It functions in the conversion of nucleobase, nucleoside and nucleotide derivatives of G to A nucleotides, and in maintaining the intracellular balance of A and G nucleotides. The sequence is that of GMP reductase from Helicobacter pylori (strain J99 / ATCC 700824) (Campylobacter pylori J99).